A 264-amino-acid chain; its full sequence is Glutamate racemase (264 aa).

Substrate is bound by residues 10–11 (DS) and 42–43 (YG). Cys73 (proton donor/acceptor) is an active-site residue. 74-75 (NT) is a binding site for substrate. Cys183 acts as the Proton donor/acceptor in catalysis. 184-185 (TH) serves as a coordination point for substrate.

It belongs to the aspartate/glutamate racemases family.

It catalyses the reaction L-glutamate = D-glutamate. It participates in cell wall biogenesis; peptidoglycan biosynthesis. Functionally, provides the (R)-glutamate required for cell wall biosynthesis. This Streptococcus pyogenes serotype M4 (strain MGAS10750) protein is Glutamate racemase.